The following is a 199-amino-acid chain: Recombination protein RecR (199 aa).

The segment at 58 to 73 (CSVCFTLSDTPVCAIC) adopts a C4-type zinc-finger fold. In terms of domain architecture, Toprim spans 81 to 176 (SLLCVVEGPT…TVTRIASGMP (96 aa)).

The protein belongs to the RecR family.

May play a role in DNA repair. It seems to be involved in an RecBC-independent recombinational process of DNA repair. It may act with RecF and RecO. This is Recombination protein RecR from Desulfosudis oleivorans (strain DSM 6200 / JCM 39069 / Hxd3) (Desulfococcus oleovorans).